The primary structure comprises 372 residues: Cytoplasmic tRNA 2-thiolation protein 1 (372 aa).

Residues 335–372 (GKKEDGGCGSGGGGCGCAGAADETENEETRKRLKDLQF) are disordered. Residues 341–351 (GCGSGGGGCGC) are compositionally biased toward gly residues. Residues 361–372 (EETRKRLKDLQF) show a composition bias toward basic and acidic residues.

This sequence belongs to the TtcA family. CTU1/NCS6/ATPBD3 subfamily.

The protein resides in the cytoplasm. Its pathway is tRNA modification; 5-methoxycarbonylmethyl-2-thiouridine-tRNA biosynthesis. In terms of biological role, plays a central role in 2-thiolation of mcm(5)S(2)U at tRNA wobble positions of tRNA(Lys), tRNA(Glu) and tRNA(Gln). Directly binds tRNAs and probably acts by catalyzing adenylation of tRNAs, an intermediate required for 2-thiolation. It is unclear whether it acts as a sulfurtransferase that transfers sulfur from thiocarboxylated URM1 onto the uridine of tRNAs at wobble position. The polypeptide is Cytoplasmic tRNA 2-thiolation protein 1 (Caenorhabditis briggsae).